A 123-amino-acid chain; its full sequence is 1,4-dihydroxy-2-naphthoyl-CoA hydrolase (123 aa).

Residue E46 is the Nucleophile or proton acceptor of the active site.

Belongs to the thioesterase PaaI family.

It catalyses the reaction 1,4-dihydroxy-2-naphthoyl-CoA + H2O = 1,4-dihydroxy-2-naphthoate + CoA + H(+). It participates in quinol/quinone metabolism; menaquinone biosynthesis. Functionally, catalyzes the hydrolysis of 1,4-dihydroxy-2-naphthoyl-CoA (DHNA-CoA) to 1,4-dihydroxy-2-naphthoate (DHNA) and free coenzyme A. Production of DHNA is required for protection against bacteriolysis in the cytosol of macrophages and tissue-specific virulence in vivo, suggesting that MenI is required to protect the bacteria from killing in the macrophage cytosol. This Listeria monocytogenes serotype 1/2a (strain 10403S) protein is 1,4-dihydroxy-2-naphthoyl-CoA hydrolase.